We begin with the raw amino-acid sequence, 586 residues long: Guanylate-binding protein 5 (586 aa).

The interval 1-306 is NLRP3-binding; it reads MALEIHMSDP…TYVNAISSGD (306 aa). Positions 1-309 are GTPase domain (Globular); the sequence is MALEIHMSDP…NAISSGDLPC (309 aa). In terms of domain architecture, GB1/RHD3-type G spans 35–276; it reads TQPVVVVAIV…FCSYIFSHSM (242 aa). GTP contacts are provided by residues 45-52, 67-69, 181-182, and L245; these read GLYRTGKS, VAS, and RD. A required for tetramerization, but not for dimerization region spans residues 529–586; the sequence is MEIAKQNWLAEQQKMQEQQMQEQAAQLSTTFQAQNRSLLSELQHAQRTVNNDDPCVLL. C583 carries the post-translational modification Cysteine methyl ester. C583 is lipidated: S-geranylgeranyl cysteine. Positions 584 to 586 are cleaved as a propeptide — removed in mature form; sequence VLL.

Belongs to the TRAFAC class dynamin-like GTPase superfamily. GB1/RHD3 GTPase family. GB1 subfamily. As to quaternary structure, homodimer; homodimerizes upon GTP-binding, forming a close face-to-face dimer. Heterodimer with other family members, including GBP1, GBP2, GBP3 and GBP4. May also form tetramers (dimer of dimers) in the presence of GTP. Interacts with NLRP3, possibly in its tetrameric form, and promotes PYCARD/ASC polymerization. In terms of assembly, homodimer; homodimerizes upon GTP-binding. GDP-bound form remains homodimeric. Homodimer; homodimerizes upon GTP-binding. GDP-bound is monomeric. Post-translationally, isoprenylation is required for proper subcellular location. Expressed in peripheral blood monocytes (at protein level).

The protein localises to the cytoplasmic vesicle membrane. It localises to the golgi apparatus membrane. Its subcellular location is the cytoplasm. The enzyme catalyses GTP + H2O = GDP + phosphate + H(+). Its function is as follows. Interferon (IFN)-inducible GTPase that plays important roles in innate immunity against a diverse range of bacterial, viral and protozoan pathogens. Hydrolyzes GTP, but in contrast to other family members, does not produce GMP. Following infection, recruited to the pathogen-containing vacuoles or vacuole-escaped bacteria and acts as a positive regulator of inflammasome assembly by promoting the release of inflammasome ligands from bacteria. Acts by promoting lysis of pathogen-containing vacuoles, releasing pathogens into the cytosol. Following pathogen release in the cytosol, promotes recruitment of proteins that mediate bacterial cytolysis: this liberates ligands that are detected by inflammasomes, such as lipopolysaccharide (LPS) that activates the non-canonical CASP4/CASP11 inflammasome or double-stranded DNA (dsDNA) that activates the AIM2 inflammasome. As an activator of NLRP3 inflammasome assembly: promotes selective NLRP3 inflammasome assembly in response to microbial and soluble, but not crystalline, agents. Independently of its GTPase activity, acts as an inhibitor of various viruses infectivity, such as HIV-1, Zika and influenza A viruses, by inhibiting FURIN-mediated maturation of viral envelope proteins. Functionally, antigenic tumor-specific truncated splice form. This Homo sapiens (Human) protein is Guanylate-binding protein 5.